A 620-amino-acid polypeptide reads, in one-letter code: Endoglucanase 10 (620 aa).

The segment at 1–26 (MFGRDPWGGPLEISNADSATDDDRSR) is disordered. A helical; Signal-anchor for type II membrane protein transmembrane segment spans residues 72–92 (IFMWTVGTILGVGLFIGFVMM). The active-site Nucleophile is the Asp-165. 6 N-linked (GlcNAc...) asparagine glycosylation sites follow: Asn-216, Asn-314, Asn-323, Asn-344, Asn-408, and Asn-425. Catalysis depends on residues His-513 and Asp-561. N-linked (GlcNAc...) asparagine glycosylation is present at Asn-567. The active site involves Glu-570.

The protein belongs to the glycosyl hydrolase 9 (cellulase E) family. In terms of tissue distribution, ubiquitous.

The protein resides in the membrane. The enzyme catalyses Endohydrolysis of (1-&gt;4)-beta-D-glucosidic linkages in cellulose, lichenin and cereal beta-D-glucans.. This chain is Endoglucanase 10 (GLU2), found in Oryza sativa subsp. japonica (Rice).